Here is a 448-residue protein sequence, read N- to C-terminus: Putative RNA-ligase (448 aa).

This sequence belongs to the asfivirus M448R family.

Its subcellular location is the virion. The protein is Putative RNA-ligase of Ornithodoros (relapsing fever ticks).